The primary structure comprises 364 residues: tRNA 2-selenouridine synthase (364 aa).

The Rhodanese domain occupies 14 to 137 (LIADTPIIDV…LRQTAIQATI (124 aa)). Catalysis depends on Cys97, which acts as the S-selanylcysteine intermediate.

Belongs to the SelU family. Monomer.

It carries out the reaction 5-methylaminomethyl-2-thiouridine(34) in tRNA + selenophosphate + (2E)-geranyl diphosphate + H2O + H(+) = 5-methylaminomethyl-2-selenouridine(34) in tRNA + (2E)-thiogeraniol + phosphate + diphosphate. It catalyses the reaction 5-methylaminomethyl-2-thiouridine(34) in tRNA + (2E)-geranyl diphosphate = 5-methylaminomethyl-S-(2E)-geranyl-thiouridine(34) in tRNA + diphosphate. The enzyme catalyses 5-methylaminomethyl-S-(2E)-geranyl-thiouridine(34) in tRNA + selenophosphate + H(+) = 5-methylaminomethyl-2-(Se-phospho)selenouridine(34) in tRNA + (2E)-thiogeraniol. The catalysed reaction is 5-methylaminomethyl-2-(Se-phospho)selenouridine(34) in tRNA + H2O = 5-methylaminomethyl-2-selenouridine(34) in tRNA + phosphate. Its function is as follows. Involved in the post-transcriptional modification of the uridine at the wobble position (U34) of tRNA(Lys), tRNA(Glu) and tRNA(Gln). Catalyzes the conversion of 2-thiouridine (S2U-RNA) to 2-selenouridine (Se2U-RNA). Acts in a two-step process involving geranylation of 2-thiouridine (S2U) to S-geranyl-2-thiouridine (geS2U) and subsequent selenation of the latter derivative to 2-selenouridine (Se2U) in the tRNA chain. The polypeptide is tRNA 2-selenouridine synthase (Escherichia coli (strain K12 / MC4100 / BW2952)).